The sequence spans 317 residues: Melanocyte-stimulating hormone receptor (317 aa).

Topologically, residues 1–37 (MPVQGSQRRLLGSLNSTPTATPHLGLAANQTGARCLE) are extracellular. Asn29 carries an N-linked (GlcNAc...) asparagine glycan. The helical transmembrane segment at 38-63 (MSIPDGLFLSLGLVSLVENVLVVTAI) threads the bilayer. At 64–72 (AKNRNLHSP) the chain is on the cytoplasmic side. A helical transmembrane segment spans residues 73–93 (MYCFICCLALSDLLVSGSNML). Residues 94-118 (ETAVTLLLEAGALAARAAVVQQLDN) lie on the Extracellular side of the membrane. Residues 119 to 140 (VIDVITCSSMLSSLCFLGAIAV) form a helical membrane-spanning segment. Residues 141–163 (DRYISIFYALRYHSIVTLPRARR) lie on the Cytoplasmic side of the membrane. A helical membrane pass occupies residues 164–183 (AIAAIWVASVLCSTLFIAYY). Over 184-191 (DHAAVLLC) the chain is Extracellular. A helical membrane pass occupies residues 192-211 (LVVFFLAMLVLMAVLYVHML). Over 212 to 240 (ARACQHAQGIARLHKRQRLAHQGFGLKGA) the chain is Cytoplasmic. A helical membrane pass occupies residues 241 to 266 (ATLTILLGIFFLCWGPFFLHLTLIVL). Topologically, residues 267-279 (CPQHPTCSCIFKN) are extracellular. A helical transmembrane segment spans residues 280–300 (FNLFLTLIICNAIIDPLIYAF). Residues 301–317 (RSQELRRTLKEVLLCSW) lie on the Cytoplasmic side of the membrane. A lipid anchor (S-palmitoyl cysteine) is attached at Cys315.

It belongs to the G-protein coupled receptor 1 family. In terms of assembly, interacts with MGRN1, but does not undergo MGRN1-mediated ubiquitination; this interaction competes with GNAS-binding and thus inhibits agonist-induced cAMP production. Interacts with OPN3; the interaction results in a decrease in MC1R-mediated cAMP signaling and ultimately a decrease in melanin production in melanocytes.

Its subcellular location is the cell membrane. In terms of biological role, receptor for MSH (alpha, beta and gamma) and ACTH. The activity of this receptor is mediated by G proteins which activate adenylate cyclase. Mediates melanogenesis, the production of eumelanin (black/brown) and phaeomelanin (red/yellow), via regulation of cAMP signaling in melanocytes. This chain is Melanocyte-stimulating hormone receptor (MC1R), found in Macaca nemestrina (Pig-tailed macaque).